The following is a 219-amino-acid chain: RING finger protein nenya (219 aa).

The RING-type zinc-finger motif lies at 6-48; sequence CNKCFRRRNVEPTLIFHMTQCQHVLCASCLSESSTDKKCPLCK. The tract at residues 161-181 is disordered; that stretch reads NQARGLRPRTPSVTTSDNTQS.

May interact with itself, with narya and vilya through its RING-type zinc finger.

Required for the formation of DNA double-strand breaks together with narya and vilya during the meiotic recombination process. Plays a redundant role with narya in chromosome segregation during female meiosis. This chain is RING finger protein nenya, found in Drosophila melanogaster (Fruit fly).